Consider the following 384-residue polypeptide: Stress response protein bis1 (384 aa).

2 disordered regions span residues 1 to 22 (MSLA…NKEQ) and 344 to 384 (SPLH…PKRV).

It belongs to the ESS2 family. Heterodimer with ish1.

The protein localises to the nucleus. It localises to the cytoplasm. The protein resides in the cytoskeleton. It is found in the spindle. Functionally, has a role in maintaining cell viability during stationary phase induced by stress response. May be involved in pre-mRNA splicing. This is Stress response protein bis1 (bis1) from Schizosaccharomyces pombe (strain 972 / ATCC 24843) (Fission yeast).